A 489-amino-acid chain; its full sequence is Homoserine O-acetyltransferase (489 aa).

The 370-residue stretch at Leu69–Glu438 folds into the AB hydrolase-1 domain. The Nucleophile role is filled by Ser163. A disordered region spans residues Ala255 to Gln329. A compositionally biased stretch (basic and acidic residues) spans Glu280 to Cys290. The span at Ser299–Gln329 shows a compositional bias: low complexity. Active-site residues include Asp403 and His432.

Belongs to the AB hydrolase superfamily. MetX family.

Its subcellular location is the cytoplasm. The enzyme catalyses L-homoserine + acetyl-CoA = O-acetyl-L-homoserine + CoA. Its pathway is amino-acid biosynthesis; L-methionine biosynthesis via de novo pathway; O-acetyl-L-homoserine from L-homoserine: step 1/1. Its function is as follows. Commits homoserine to the methionine biosynthesis pathway by catalyzing its O-acetylation. This is Homoserine O-acetyltransferase (met6) from Schizosaccharomyces pombe (strain 972 / ATCC 24843) (Fission yeast).